The chain runs to 252 residues: Protein GrpE (252 aa).

Positions 1–22 (MHNPQSRGHNLSQAMSDQTVTN) are enriched in polar residues. A disordered region spans residues 1-70 (MHNPQSRGHN…EEDQASEATS (70 aa)).

Belongs to the GrpE family. As to quaternary structure, homodimer.

It is found in the cytoplasm. In terms of biological role, participates actively in the response to hyperosmotic and heat shock by preventing the aggregation of stress-denatured proteins, in association with DnaK and GrpE. It is the nucleotide exchange factor for DnaK and may function as a thermosensor. Unfolded proteins bind initially to DnaJ; upon interaction with the DnaJ-bound protein, DnaK hydrolyzes its bound ATP, resulting in the formation of a stable complex. GrpE releases ADP from DnaK; ATP binding to DnaK triggers the release of the substrate protein, thus completing the reaction cycle. Several rounds of ATP-dependent interactions between DnaJ, DnaK and GrpE are required for fully efficient folding. This chain is Protein GrpE, found in Thermosynechococcus vestitus (strain NIES-2133 / IAM M-273 / BP-1).